Consider the following 24-residue polypeptide: Brevinin-1Bf (24 aa).

A disulfide bridge connects residues C18 and C24.

In terms of tissue distribution, expressed by the skin glands.

It is found in the secreted. Functionally, antibacterial activity against Gram-positive bacterium S.aureus and Gram-negative bacterium E.coli. The protein is Brevinin-1Bf of Lithobates berlandieri (Rio Grande leopard frog).